We begin with the raw amino-acid sequence, 96 residues long: Protein E7 (96 aa).

Residues 1–42 (MIGNQPNVNNLDVNLEELVLPVSLLADEELSPDGDPEEEEHY) form an E7 terminal domain region. A zinc finger lies at 50–86 (CKPCGAGVRFTIIATPSAVITLRQLLLQEVFLTCLRC). The Nuclear export signal motif lies at 68–76 (VITLRQLLL).

This sequence belongs to the papillomaviridae E7 protein family. As to quaternary structure, homodimer. Homooligomer. Interacts with host RB1; this interaction induces dissociation of RB1-E2F1 complex thereby disrupting RB1 activity. Interacts with host EP300; this interaction represses EP300 transcriptional activity. Interacts with protein E2; this interaction inhibits E7 oncogenic activity. Interacts with host TMEM173/STING; this interaction impairs the ability of TMEM173/STING to sense cytosolic DNA and promote the production of type I interferon (IFN-alpha and IFN-beta). Highly phosphorylated.

The protein localises to the host cytoplasm. It is found in the host nucleus. Its function is as follows. Plays a role in viral genome replication by driving entry of quiescent cells into the cell cycle. Stimulation of progression from G1 to S phase allows the virus to efficiently use the cellular DNA replicating machinery to achieve viral genome replication. E7 protein has both transforming and trans-activating activities. Induces the disassembly of the E2F1 transcription factor from RB1, with subsequent transcriptional activation of E2F1-regulated S-phase genes. Interferes with host histone deacetylation mediated by HDAC1 and HDAC2, leading to transcription activation. Also plays a role in the inhibition of both antiviral and antiproliferative functions of host interferon alpha. Interaction with host TMEM173/STING impairs the ability of TMEM173/STING to sense cytosolic DNA and promote the production of type I interferon (IFN-alpha and IFN-beta). This chain is Protein E7, found in Homo sapiens (Human).